A 409-amino-acid chain; its full sequence is Glycosaminoglycan xylosylkinase (409 aa).

At 1–6 (MKLKQR) the chain is on the cytoplasmic side. Residues 7–25 (VVVLCAVLFLLGLAKVFLL) form a helical; Signal-anchor for type II membrane protein membrane-spanning segment. The Lumenal portion of the chain corresponds to 26-409 (DGGEGSAASR…IEDRMNLPHP (384 aa)). ATP contacts are provided by Q107 and K123. Residue D142 coordinates Mn(2+). N193 carries N-linked (GlcNAc...) asparagine glycosylation. Intrachain disulfides connect C196–C211 and C201–C204. 222-225 (TLWL) contacts ATP. Intrachain disulfides connect C257–C331 and C332–C389. D289 is a catalytic residue. 2 residues coordinate ATP: E294 and D309. Residue D309 coordinates Mn(2+).

The protein belongs to the FAM20 family. Requires Mn(2+) as cofactor.

The protein localises to the golgi apparatus membrane. It carries out the reaction 3-O-(beta-D-galactosyl-(1-&gt;3)-beta-D-galactosyl-(1-&gt;4)-beta-D-xylosyl)-L-seryl-[protein] + ATP = 3-O-(beta-D-galactosyl-(1-&gt;3)-beta-D-galactosyl-(1-&gt;4)-beta-D-2-O-phosphoxylosyl)-L-seryl-[protein] + ADP + H(+). Functionally, responsible for the 2-O-phosphorylation of xylose in the glycosaminoglycan-protein linkage region of proteoglycans thereby regulating the amount of mature GAG chains. Sulfated glycosaminoglycans (GAGs), including heparan sulfate and chondroitin sulfate, are synthesized on the so-called common GAG-protein linkage region (GlcUAbeta1-3Galbeta1-3Galbeta1-4Xylbeta1-O-Ser) of core proteins, which is formed by the stepwise addition of monosaccharide residues by the respective specific glycosyltransferases. This Danio rerio (Zebrafish) protein is Glycosaminoglycan xylosylkinase.